Reading from the N-terminus, the 347-residue chain is Merozoite surface protein P12 (347 aa).

A signal peptide spans 1-25 (MIKLSKKYCLGISFVLYILLSVCEG). 6-Cys domains are found at residues 27-172 (KNLT…IPSL) and 175-305 (KVKG…ISSS). A glycan (N-linked (GlcNAc...) asparagine) is linked at asparagine 28. 3 disulfide bridges follow: cysteine 31-cysteine 53, cysteine 67-cysteine 138, and cysteine 81-cysteine 136. Residues asparagine 147, asparagine 200, asparagine 228, asparagine 242, asparagine 265, and asparagine 322 are each glycosylated (N-linked (GlcNAc...) asparagine). Cystine bridges form between cysteine 179-cysteine 211, cysteine 225-cysteine 286, and cysteine 236-cysteine 284. Residue asparagine 322 is the site of GPI-anchor amidated asparagine attachment. Positions 323–347 (SSFLTLSSYCAFITFIITSFLSFIL) are cleaved as a propeptide — removed in mature form.

Heterodimer; heterodimerizes with PF41. May form an antiparallel heterodimer with PF41. Post-translationally, processed into a soluble form.

It localises to the cell surface. The protein localises to the cell membrane. This is Merozoite surface protein P12 (PF12) from Plasmodium falciparum (isolate 3D7).